The chain runs to 262 residues: Flap endonuclease Xni (262 aa).

Asp105 is a Mg(2+) binding site. Residues 164–251 form the 5'-3' exonuclease domain; that stretch reads SQFLDLMALA…NINLKDFRAN (88 aa). Residues Leu172, Ala173, Pro181, Ile183, and Ile186 each contribute to the K(+) site. The interaction with DNA stretch occupies residues 185-190; sequence GIGPKS.

It belongs to the Xni family. The cofactor is Mg(2+). K(+) is required as a cofactor.

In terms of biological role, has flap endonuclease activity. During DNA replication, flap endonucleases cleave the 5'-overhanging flap structure that is generated by displacement synthesis when DNA polymerase encounters the 5'-end of a downstream Okazaki fragment. This Shewanella sp. (strain W3-18-1) protein is Flap endonuclease Xni.